The sequence spans 503 residues: uncharacterized protein (503 aa).

ABC transporter domains are found at residues 8–249 (VPVA…LGRD) and 261–499 (IVDQ…MSAI). Residue 43 to 50 (GKNGAGKS) coordinates ATP.

It belongs to the ABC transporter superfamily.

In terms of biological role, probably part of a binding-protein-dependent transport system YphDEF. Probably responsible for energy coupling to the transport system. This is an uncharacterized protein from Escherichia coli (strain K12).